We begin with the raw amino-acid sequence, 281 residues long: Pantothenate synthetase (281 aa).

Residue 30-37 participates in ATP binding; it reads MGNLHQGH. The Proton donor role is filled by histidine 37. Glutamine 61 lines the (R)-pantoate pocket. Glutamine 61 serves as a coordination point for beta-alanine. 149–152 is a binding site for ATP; the sequence is GNKD. Residue glutamine 155 participates in (R)-pantoate binding. Residues isoleucine 178 and 186–189 each bind ATP; that span reads MSSR.

The protein belongs to the pantothenate synthetase family. As to quaternary structure, homodimer.

The protein resides in the cytoplasm. It carries out the reaction (R)-pantoate + beta-alanine + ATP = (R)-pantothenate + AMP + diphosphate + H(+). It participates in cofactor biosynthesis; (R)-pantothenate biosynthesis; (R)-pantothenate from (R)-pantoate and beta-alanine: step 1/1. Its function is as follows. Catalyzes the condensation of pantoate with beta-alanine in an ATP-dependent reaction via a pantoyl-adenylate intermediate. The polypeptide is Pantothenate synthetase (Shewanella sp. (strain ANA-3)).